A 691-amino-acid polypeptide reads, in one-letter code: MSTPEITPAAVTFRVPAGTPAGAAMRELGLPNKGPEAIVCVKETEGESAGQLRDLSWVPQQDVEVAAVPANTDEGRGVIRHSCAHVLAQAVQKEFPGTKLGIGPAIDNGFYYDFQVAEPFTPEDLNKLEKTMKKIIKSGQKFERKAYDDVEQARAEYADEPFKTELIADKGNVDPDSDEATEVGAGELTAYSNVNPRTGEVEWYDLCRGPHVPTTRYIPAFALTRSSAAYWRGDQSKAGLQRIYGTAWESKEALAEYQTMMAEAEKRDHRRLGQELDLFSFPDEIGSGFPVFHPDGGIVRLEMEEHSRKRHIASGYSFVNTPHVTKGDLFQKSGHLDFYADGMFPPMQLDGETDDEGNVTKPAQDYYAKPMNCPMHNLIFASRGRSYRELPLRLFEFGTVYRYEKSGVIHGLTRARGFTQDDAHIYCTEDQLEQELTTVLEFIISLLRDYGLDDFYLELSTKDPNKFVGSDEIWERSTEILERVATKSGLELVPDPAGAAFYGPKISVQARDAIGRTWQMSTVQLDFNLPERFNLEYTAPDGSKQRPIMIHRALFGSIERFFGVLLEHYAGAFPAWLAPHQVVGIPVADEFNEYLENFAADLRAQGIRAEVDTSDDRMQKKIRNHTTGKVPFMLLVGGRDVEANAVSFRFLDGTQVNGVPREDALRIISNWIAERRNDQPSSELIQPLVEV.

One can recognise a TGS domain in the interval 1–69; sequence MSTPEITPAA…QQDVEVAAVP (69 aa). The catalytic stretch occupies residues 268 to 574; the sequence is DHRRLGQELD…LLEHYAGAFP (307 aa). Cys-373, His-424, and His-551 together coordinate Zn(2+).

Belongs to the class-II aminoacyl-tRNA synthetase family. Homodimer. Zn(2+) is required as a cofactor.

It is found in the cytoplasm. The catalysed reaction is tRNA(Thr) + L-threonine + ATP = L-threonyl-tRNA(Thr) + AMP + diphosphate + H(+). Functionally, catalyzes the attachment of threonine to tRNA(Thr) in a two-step reaction: L-threonine is first activated by ATP to form Thr-AMP and then transferred to the acceptor end of tRNA(Thr). Also edits incorrectly charged L-seryl-tRNA(Thr). The chain is Threonine--tRNA ligase from Corynebacterium jeikeium (strain K411).